Consider the following 455-residue polypeptide: Glutamate--tRNA ligase (455 aa).

A 'HIGH' region motif is present at residues 8-18 (PSPTGYLHIGG). The short motif at 231–235 (RLSKR) is the 'KMSKS' region element. Lysine 234 lines the ATP pocket.

It belongs to the class-I aminoacyl-tRNA synthetase family. Glutamate--tRNA ligase type 1 subfamily. Monomer.

Its subcellular location is the cytoplasm. The catalysed reaction is tRNA(Glu) + L-glutamate + ATP = L-glutamyl-tRNA(Glu) + AMP + diphosphate. In terms of biological role, catalyzes the attachment of glutamate to tRNA(Glu) in a two-step reaction: glutamate is first activated by ATP to form Glu-AMP and then transferred to the acceptor end of tRNA(Glu). The polypeptide is Glutamate--tRNA ligase (Vesicomyosocius okutanii subsp. Calyptogena okutanii (strain HA)).